Reading from the N-terminus, the 315-residue chain is Methionyl-tRNA formyltransferase (315 aa).

The tract at residues 2–189 (SESLRIIFAG…LITTLKQLAD (188 aa)) is N-terminal domain. 113 to 116 (SLLP) contributes to the (6S)-5,6,7,8-tetrahydrofolate binding site. The tract at residues 210–315 (KEEARIDWSL…EWFVPGNRLA (106 aa)) is C-terminal domain.

It belongs to the Fmt family.

The enzyme catalyses L-methionyl-tRNA(fMet) + (6R)-10-formyltetrahydrofolate = N-formyl-L-methionyl-tRNA(fMet) + (6S)-5,6,7,8-tetrahydrofolate + H(+). Its function is as follows. Attaches a formyl group to the free amino group of methionyl-tRNA(fMet). The formyl group appears to play a dual role in the initiator identity of N-formylmethionyl-tRNA by promoting its recognition by IF2 and preventing the misappropriation of this tRNA by the elongation apparatus. The protein is Methionyl-tRNA formyltransferase of Escherichia coli O6:H1 (strain CFT073 / ATCC 700928 / UPEC).